Consider the following 82-residue polypeptide: Exodeoxyribonuclease 7 small subunit (82 aa).

The protein belongs to the XseB family. Heterooligomer composed of large and small subunits.

The protein localises to the cytoplasm. The enzyme catalyses Exonucleolytic cleavage in either 5'- to 3'- or 3'- to 5'-direction to yield nucleoside 5'-phosphates.. Bidirectionally degrades single-stranded DNA into large acid-insoluble oligonucleotides, which are then degraded further into small acid-soluble oligonucleotides. The sequence is that of Exodeoxyribonuclease 7 small subunit from Coxiella burnetii (strain CbuG_Q212) (Coxiella burnetii (strain Q212)).